The primary structure comprises 913 residues: MDFSRLHTYTPPQCVPENTGYTYALSSSYSSDALDFETEHKLEPVFDSPRMSRRSLRLVTTASYSSGDSQAIDSHISTSRATPAKGRETRTVKQRRSASKPAFSINHLSGKGLSSSTSHDSSCSLRSATVLRHPVLDESLIREQTKVDHFWGLDDDGDLKGGNKAATQGNGELAAEVASSNGYTCRDCRMLSARTDALTAHSAIHGTTSRVYSRDRTLKPRGVSFYLDRTLWLAKSTSSSFASFIVQLFQVVLMKLNFETYKLKGYESRAYESQSYETKSHESEAHLGHCGRMTAGELSRVDGESLCDDCKGKKHLEIHTATHSQLPQPHRVAGAMGRLCIYTGDLLVQALRRTRAAGWSVAEAVWSVLWLAVSAPGKAASGTFWWLGSGWYQFVTLISWLNVFLLTRCLRNICKVFVLLLPLLLLLGAGVSLWGQGNFFSLLPVLNWTAMQPTQRVDDSKGMHRPGPLPPSPPPKVDHKASQWPQESDMGQKVASLSAQCHNHDERLAELTVLLQKLQIRVDQVDDGREGLSLWVKNVVGQHLQEMGTIEPPDAKTDFMTFHHDHEVRLSNLEDVLRKLTEKSEAIQKELEETKLKAGSRDEEQPLLDRVQHLELELNLLKSQLSDWQHLKTSCEQAGARIQETVQLMFSEDQQGGSLEWLLEKLSSRFVSKDELQVLLHDLELKLLQNITHHITVTGQAPTSEAIVSAVNQAGISGITEAQAHIIVNNALKLYSQDKTGMVDFALESGGGSILSTRCSETYETKTALLSLFGVPLWYFSQSPRVVIQPDIYPGNCWAFKGSQGYLVVRLSMKIYPTTFTMEHIPKTLSPTGNISSAPKDFAVYGLETEYQEEGQPLGRFTYDQEGDSLQMFHTLERPDQAFQIVELRVLSNWGHPEYTCLYRFRVHGEPIQ.

An LMNA-binding region spans residues 1 to 139 (MDFSRLHTYT…VLRHPVLDES (139 aa)). Over 1–415 (MDFSRLHTYT…LTRCLRNICK (415 aa)) the chain is Nuclear. Ser48 and Ser66 each carry phosphoserine. A compositionally biased stretch (polar residues) spans 69–81 (SQAIDSHISTSRA). Positions 69–120 (SQAIDSHISTSRATPAKGRETRTVKQRRSASKPAFSINHLSGKGLSSSTSHD) are disordered. A compositionally biased stretch (low complexity) spans 108–120 (LSGKGLSSSTSHD). Ser139 is modified (phosphoserine). The interval 209–302 (SRVYSRDRTL…MTAGELSRVD (94 aa)) is SYNE2-binding. An EMD-binding region spans residues 223–302 (VSFYLDRTLW…MTAGELSRVD (80 aa)). The helical transmembrane segment at 416–436 (VFVLLLPLLLLLGAGVSLWGQ) threads the bilayer. Over 437 to 913 (GNFFSLLPVL…RFRVHGEPIQ (477 aa)) the chain is Perinuclear space. The interval 456–485 (RVDDSKGMHRPGPLPPSPPPKVDHKASQWP) is disordered. Coiled-coil stretches lie at residues 491–533 (GQKV…EGLS) and 563–638 (HHDH…CEQA). Positions 703–913 (TSEAIVSAVN…RFRVHGEPIQ (211 aa)) are sufficient for interaction with SYNE1 and SYNE2. The region spanning 751 to 912 (GGSILSTRCS…YRFRVHGEPI (162 aa)) is the SUN domain.

Core component of the LINC complex which is composed of inner nuclear membrane SUN domain-containing proteins coupled to outer nuclear membrane KASH domain-containing nesprins. SUN and KASH domain-containing proteins seem to bind each other promiscuously; however, differentially expression of LINC complex constituents is giving rise to specific assemblies. At least SUN1/2-containing core LINC complexes are proposed to be hexameric composed of three protomers of each KASH and SUN domain-containing protein. Interacts with KASH5 (via the last 22 amino acids); this interaction mediates KASH5 telomere localization by forming a SUN1:KASH5 LINC complex. Isoform 5 is proposed to form a non-nuclear spermatogenesis-specific LINC complex with SYNE3 during sperm head formation. Interacts with SYNE2 and SYNE1; probably forming respective LINC complexes. Interacts with A-type lamin with a strong preference for unprocessed A-type lamin compared with the mature protein. Interaction with lamins B1 and C is hardly detectable. Interacts with NAT10. Interacts with EMD and TSNAX. Associates with the nuclear pore complex (NPC). Interacts with CCDC79/TERB1; promoting the accumulation of the LINC complex complexes at the telomere-nuclear envelope attachment sites. Interacts with IRAG2. Interacts (via KASH domain) with TMEM258. In terms of processing, the disulfide bond with KASH domain-containing nesprins is required for stability of the respective LINC complexes under tensile forces. As to expression, widely expressed. Expressed in cochlear outer hair cells (at protein level). Seven isoforms are expressed in testis including testis-specific isoform 5. Isoform 5 is the only isoform expressed at the end of sperm differentiation. Six isoforms are expressed in muscle, heart and brain, four isoforms in kidney and three isoforms in liver.

The protein localises to the nucleus inner membrane. Its subcellular location is the cytoplasmic vesicle. The protein resides in the secretory vesicle. It is found in the acrosome outer membrane. As a component of the LINC (LInker of Nucleoskeleton and Cytoskeleton) complex involved in the connection between the nuclear lamina and the cytoskeleton. The nucleocytoplasmic interactions established by the LINC complex play an important role in the transmission of mechanical forces across the nuclear envelope and in nuclear movement and positioning. Required for interkinetic nuclear migration (INM) and essential for nucleokinesis and centrosome-nucleus coupling during radial neuronal migration in the cerebral cortex and during glial migration. Involved in telomere attachment to nuclear envelope in the prophase of meiosis implicating a SUN1/2:KASH5 LINC complex in which SUN1 and SUN2 seem to act at least partial redundantly. Required for gametogenesis and involved in selective gene expression of coding and non-coding RNAs needed for gametogenesis. Helps to define the distribution of nuclear pore complexes (NPCs). Required for efficient localization of SYNE4 in the nuclear envelope. May be involved in nuclear remodeling during sperm head formation in spermatogenesis. May play a role in DNA repair by suppressing non-homologous end joining repair to facilitate the repair of DNA cross-links. Functionally, isoform 5 may be involved in nuclear remodeling during sperm head formation in spermatogenesis. A probable SUN1 isoform 5:SYNE3 LINC complex may tether spermatid nuclei to anterior cytoskeletal structures such as actin filaments present at membraneous junctions of spermatids and Sertoli cells. This chain is SUN domain-containing protein 1, found in Mus musculus (Mouse).